Here is a 1392-residue protein sequence, read N- to C-terminus: DNA-directed RNA polymerase subunit beta'' (1392 aa).

Residues C224, C295, C302, and C305 each contribute to the Zn(2+) site.

The protein belongs to the RNA polymerase beta' chain family. RpoC2 subfamily. In terms of assembly, in plastids the minimal PEP RNA polymerase catalytic core is composed of four subunits: alpha, beta, beta', and beta''. When a (nuclear-encoded) sigma factor is associated with the core the holoenzyme is formed, which can initiate transcription. The cofactor is Zn(2+).

It localises to the plastid. The protein localises to the chloroplast. It carries out the reaction RNA(n) + a ribonucleoside 5'-triphosphate = RNA(n+1) + diphosphate. Its function is as follows. DNA-dependent RNA polymerase catalyzes the transcription of DNA into RNA using the four ribonucleoside triphosphates as substrates. This is DNA-directed RNA polymerase subunit beta'' from Nicotiana tomentosiformis (Tobacco).